The chain runs to 283 residues: Protease HtpX (283 aa).

2 helical membrane-spanning segments follow: residues 4 to 24 (ILLF…ILSV) and 33 to 53 (GGIL…SLFL). Position 139 (His139) interacts with Zn(2+). Glu140 is an active-site residue. Residue His143 participates in Zn(2+) binding. Helical transmembrane passes span 147–167 (GDMV…IFLS) and 190–210 (IYFL…SIIA). Glu218 lines the Zn(2+) pocket.

The protein belongs to the peptidase M48B family. Zn(2+) serves as cofactor.

Its subcellular location is the cell inner membrane. This Haemophilus influenzae (strain PittGG) protein is Protease HtpX.